The chain runs to 755 residues: Transcription factor kayak, isoforms A/B/F (755 aa).

2 stretches are compositionally biased toward low complexity: residues phenylalanine 23–glutamine 66 and glutamine 149–serine 159. Disordered regions lie at residues phenylalanine 23–valine 75, glutamine 149–proline 168, leucine 316–serine 350, and glycine 383–valine 440. Over residues leucine 316–glutamine 333 the composition is skewed to polar residues. 2 stretches are compositionally biased toward low complexity: residues threonine 341–serine 350 and glycine 383–threonine 397. Residues glutamate 418–histidine 481 enclose the bZIP domain. The tract at residues lysine 420–arginine 439 is basic motif. The leucine-zipper stretch occupies residues leucine 446–leucine 453. Residues alanine 510–glycine 531 show a composition bias toward low complexity. Disordered regions lie at residues alanine 510–leucine 552 and aspartate 716–leucine 755. The segment covering threonine 539–proline 549 has biased composition (polar residues). Serine 548 bears the Phosphoserine mark.

It belongs to the bZIP family. Fos subfamily. As to quaternary structure, homodimer. Heterodimer with Jra. The kay-Jra heterodimer binds more stably to the AP-1 site than either of the two proteins alone. As to expression, early expression in the embryo is mesodermal and some of this expression is localized to a region surrounding the cephalic furrow. Later in embryonic development expression is ectodermal, corresponding to muscle attachment sites. Also observed in part of the mid- and hindgut and in the anal pad.

Its subcellular location is the nucleus. Functionally, developmentally regulated transcription factor AP-1 binds and recognizes the enhancer DNA sequence: 5'-TGA[CG]TCA-3'. May play a role in the function or determination of a particular subset of cells in the developing embryo. It is able to carry out its function either independently of or in conjunction with Jra. This Drosophila melanogaster (Fruit fly) protein is Transcription factor kayak, isoforms A/B/F (kay).